Reading from the N-terminus, the 387-residue chain is Probable multidrug resistance protein EmrK (387 aa).

The Cytoplasmic portion of the chain corresponds to 1–16 (MEQINSNKKHSNRRKY). Residues 17–37 (FSLLAVVLFIAFSGAYAYWSM) traverse the membrane as a helical segment. The Periplasmic segment spans residues 38 to 387 (ELEDMISTDD…SNIISHNGQL (350 aa)).

It belongs to the membrane fusion protein (MFP) (TC 8.A.1) family. In terms of assembly, part of the tripartite efflux system EmrYK-TolC, which is composed of an inner membrane transporter, EmrY, a membrane fusion protein, EmrK, and an outer membrane component, TolC. The complex forms a large protein conduit and can translocate molecules across both the inner and outer membranes.

Its subcellular location is the cell inner membrane. In terms of biological role, part of the tripartite efflux system EmrYK-TolC, which confers resistance to various drugs. In Escherichia coli (strain K12), this protein is Probable multidrug resistance protein EmrK (emrK).